Here is a 534-residue protein sequence, read N- to C-terminus: uncharacterized protein (534 aa).

4 disordered regions span residues 1 to 93, 123 to 260, 313 to 349, and 383 to 505; these read MSSS…DDTG, SPES…LSSA, AAAT…TFPS, and PWGA…QGCP. The segment covering 35–45 has biased composition (pro residues); the sequence is GPGPDPGPEPG. Phosphoserine occurs at positions 87 and 123. Positions 145–161 are enriched in low complexity; it reads RGAAAQRCGEAARAEAG. The segment covering 230–239 has biased composition (basic and acidic residues); sequence SPKDPRDTPR.

This is an uncharacterized protein from Bos taurus (Bovine).